Reading from the N-terminus, the 275-residue chain is Gibberellin-regulated protein 14 (275 aa).

The signal sequence occupies residues 1 to 21 (MALSLLSVFIFFHVFTNVVFA). Positions 34–207 (PTPTLPSPSP…TAPPVKPPTP (174 aa)) are disordered. A compositionally biased stretch (pro residues) spans 36–207 (PTLPSPSPAT…TAPPVKPPTP (172 aa)).

This sequence belongs to the GASA family. Post-translationally, six disulfide bonds may be present. Expressed in flower abscission zone, style, stamen filaments and lateral roots.

The protein localises to the secreted. Its function is as follows. Gibberellin-regulated protein that may function in hormonal controlled steps of development such as seed germination, flowering and seed maturation. This Arabidopsis thaliana (Mouse-ear cress) protein is Gibberellin-regulated protein 14 (GASA14).